The following is a 250-amino-acid chain: Probable xyloglucan-specific endo-beta-1,4-glucanase A (250 aa).

The signal sequence occupies residues 1–19 (MKLSVLSLASLASAAALNA). Asn72 carries N-linked (GlcNAc...) asparagine glycosylation.

It belongs to the glycosyl hydrolase 12 (cellulase H) family.

The protein resides in the secreted. It catalyses the reaction xyloglucan + H2O = xyloglucan oligosaccharides.. Catalyzes endohydrolysis of 1,4-beta-D-glucosidic linkages in xyloglucan with retention of the beta-configuration of the glycosyl residues. Specific for xyloglucan and does not hydrolyze other cell wall components. The protein is Probable xyloglucan-specific endo-beta-1,4-glucanase A (xgeA) of Aspergillus terreus (strain NIH 2624 / FGSC A1156).